Consider the following 428-residue polypeptide: Cytochrome bc complex cytochrome b subunit (428 aa).

Low complexity-rich tracts occupy residues 1–15 (MAEN…TAPA) and 21–52 (APGA…AAAP). A disordered region spans residues 1–72 (MAENTPKPAA…RPDPNPFKDS (72 aa)). The span at 59 to 72 (PPVDRPDPNPFKDS) shows a compositional bias: basic and acidic residues. The helical transmembrane segment at 110–130 (YFGGLGLFFFVIQILTGLLLL) threads the bilayer. Heme b contacts are provided by His161 and His175. 6 helical membrane passes run 162–182 (AWSA…TFFM), 193–213 (WVSG…GYLL), 260–280 (LHVV…LTLV), 312–331 (GIGW…MFPW), 369–389 (ELLA…VPFI), and 401–421 (IFTI…YRVY). Residues His261 and His276 each contribute to the heme b site.

It belongs to the cytochrome b family. Heme b is required as a cofactor.

The protein resides in the cell inner membrane. In terms of biological role, component of the green S-bacteria bc complex, which consists of the Rieske protein and cytochrome b subunit but appears to lack a cytochrome c1-equivalent. This complex has a comparatively low redox potential. In Chlorobaculum thiosulfatiphilum (Chlorobium limicola f.sp. thiosulfatophilum), this protein is Cytochrome bc complex cytochrome b subunit (petB).